We begin with the raw amino-acid sequence, 219 residues long: Transmembrane emp24 domain-containing protein 10 (219 aa).

Positions M1 to A31 are cleaved as a signal peptide. The segment at M1–E142 is required for interaction with STX17. At I32–R185 the chain is on the lumenal side. Residues R41–S193 form the GOLD domain. Residues R171 and R176 each carry the dimethylated arginine modification. N179 carries an N-linked (GlcNAc...) asparagine glycan. Residues V186–F206 traverse the membrane as a helical segment. An interaction with COPG1 region spans residues Q204–E219. Residues Y207–E219 lie on the Cytoplasmic side of the membrane. Residues Y207–E219 are interaction with ARF1 and IL1B. The short motif at F211–F212 is the COPII vesicle coat-binding element. Positions F211 to E219 match the COPI vesicle coat-binding motif.

This sequence belongs to the EMP24/GP25L family. As to quaternary structure, predominantly dimeric and to a lesser extent monomeric in the ER. Monomer and dimer in ERGIC and cis-Golgi network. Forms homooligomer (via GOLD domain); the assembly is promoted by direct binding with leaderless cargos and may form a protein channel that facilitates cargo entry into the ERGIC. Forms heterooligomeric complexes with other members of the p24 family such as TMED2, TMED7 and TMED9. Interacts (via GOLD domain) with TMED2 (via GOLD domain); the complex is required for export of TMED10 from the ER to the cis-Golgi network; the complex is proposed to be involved in cis-Golgi network dynamics and / or biogenesis. Associates with the COPI vesicle coat subunits (coatomer). Tetramerization of the cytoplasmic domain at the Golgi membrane in vitro; the complex is proposed to interact with COPI coatomer and induce budding of the vesicles. Interacts with COPG1; the interaction involves TMED10 homodimer. Interacts with ARF1 (GDP-bound); the interaction probably involves a TMED10 oligomer. Interacts with SEC23A, SEC24B, SEC24C and SEC24D components of the coat protein complex II/COPII, indicative of an association of TMED10 with the COPII vesicle coat. Interacts with CD59. Interacts with MPPE1/PGAP5; the complex might recruit and sort GPI-anchored proteins to the ER-exit site, or the interaction might lead to recycling of PGAP5 between the ER and the Golgi. Interacts with F2LR1/PAR2. Interacts with KDELR2/ERD2; the interaction is disrupted by KDELR2 ligand. Found in a complex composed at least of SURF4, TMED2 and TMED10. Associates with the presenilin-dependent gamma-secretase complex. Interacts with STX17; the interaction is direct. Interacts with IL-1; the interaction is direct. Interacts with RAB21 (active GTP-bound form); the interaction is indirect and regulates TMED10 abundance and localization at the Golgi.

The protein localises to the endoplasmic reticulum membrane. It is found in the endoplasmic reticulum-Golgi intermediate compartment membrane. Its subcellular location is the golgi apparatus membrane. The protein resides in the golgi apparatus. It localises to the cis-Golgi network membrane. The protein localises to the trans-Golgi network membrane. It is found in the cytoplasmic vesicle. Its subcellular location is the secretory vesicle membrane. The protein resides in the cell membrane. It localises to the melanosome. Its function is as follows. Cargo receptor involved in protein vesicular trafficking and quality control in the endoplasmic reticulum (ER) and Golgi. The p24 protein family is a group of transmembrane proteins that bind coat protein complex I/COPI and coat protein complex II/COPII involved in vesicular trafficking between the membranes. Acts at the lumenal side for incorporation of secretory cargo molecules into transport vesicles and involved in vesicle coat formation at the cytoplasmic side. Mainly functions in the early secretory pathway and cycles between the ER, ER-Golgi intermediate compartment (ERGIC) and Golgi, mediating cargo transport through COPI and COPII-coated vesicles. In COPII vesicle-mediated anterograde transport, involved in the transport of GPI-anchored proteins by acting together with TMED2 as their cargo receptor; the function specifically implies SEC24C and SEC24D of the COPII vesicle coat and lipid raft-like microdomains of the ER. Recognizes GPI anchors structural remodeled in the ER by the GPI inositol-deacylase/PGAP1 and the metallophosphoesterase MPPE1/PGAP5. In COPI vesicle-mediated retrograde transport, involved in the biogenesis of COPI vesicles and vesicle coat recruitment. Involved in trafficking of amyloid beta A4 protein and soluble APP-beta release (independent from the modulation of gamma-secretase activity). Involved in the KDELR2-mediated retrograde transport of the toxin A subunit (CTX-A-K63)together with COPI and the COOH terminus of KDELR2. On Golgi membranes, acts as a primary receptor for ARF1-GDP, a GTP-binding protein involved in COPI-vesicle formation. Increases coatomer-dependent GTPase-activating activity of ARFGAP2 which mediates the hydrolysis of ARF1-bound GTP and therefore modulates protein trafficking from the Golgi apparatus. Involved in the exocytic trafficking of G protein-coupled receptors F2LR1/PAR2 (trypsin and tryspin-like enzyme receptor), OPRM1 (opioid receptor) and P2RY4 (UTD and UDP receptor) from the Golgi to the plasma membrane, thus contributing to receptor resensitization. In addition to its cargo receptor activity, may also act as a protein channel after oligomerization, facilitating the post-translational entry of leaderless cytoplasmic cargo into the ERGIC. Involved in the translocation into ERGIC, the vesicle entry and the secretion of leaderless cargos (lacking the secretion signal sequence), including the mature form of interleukin 1/IL-1 family members, the alpha-crystallin B chain HSPB5, the carbohydrate-binding proteins galectin-1/LGALS1 and galectin-3/LGALS3, the microtubule-associated protein Tau/MAPT, and the annexin A1/ANXA1; the translocation process is dependent on cargo protein unfolding and enhanced by chaperones HSP90AB1 and HSP90B1/GRP9. Could also associates with the presenilin-dependent gamma-secretase complex in order to regulate gamma-cleavages of the amyloid beta A4 protein to yield amyloid-beta 40/Abeta40. The chain is Transmembrane emp24 domain-containing protein 10 (TMED10) from Pongo abelii (Sumatran orangutan).